We begin with the raw amino-acid sequence, 78 residues long: uncharacterized protein (78 aa).

The tract at residues 58–78 (EANDPEKKIPSTAAKAISLSP) is disordered.

This is an uncharacterized protein from Vaccinia virus (strain Copenhagen) (VACV).